The primary structure comprises 298 residues: Rhodomycin D methylesterase DauP (298 aa).

The 253-residue stretch at 25 to 277 (PLLLIAGGNL…VEIENMGHAL (253 aa)) folds into the AB hydrolase-1 domain.

The protein belongs to the methyl esterase DnrP family.

It carries out the reaction rhodomycin D + H2O = 10-carboxy-13-deoxycarminomycin + methanol + H(+). It catalyses the reaction 4-O-methylrhodomycin D + H2O = 10-carboxy-13-deoxydaunorubicin + methanol + H(+). It participates in antibiotic biosynthesis; daunorubicin biosynthesis. Its pathway is antibiotic biosynthesis; carminomycin biosynthesis. Its function is as follows. Involved in the biosynthesis of the anthracyclines carminomycin and daunorubicin (daunomycin) which are aromatic polyketide antibiotics that exhibit high cytotoxicity and are widely applied in the chemotherapy of a variety of cancers. Catalyzes the removal of methyl group from the carbomethoxy group of rhodomycin D (10-carbomethoxy-13-deoxycarminomycin) and 4-O-methylrhodomycin D to yield 10-carboxy-13-deoxycarminomycin and 10-carboxy-13-deoxydaunorubicin, respectively. Could be also involved in the decarboxylation of 10-carboxy-13-deoxycarminomycin and 10-carboxy-13-deoxydaunorubicin to yield 13-deoxycarminomycin and 13-deoxydaunorubicin, respectively. It seems that DauK may influence the ability of DauP to carry out the decarboxylation. This Streptomyces sp. (strain C5) protein is Rhodomycin D methylesterase DauP (dauP).